We begin with the raw amino-acid sequence, 360 residues long: Peptide chain release factor 1 (360 aa).

An N5-methylglutamine modification is found at Gln-235. Positions Ala-284–Phe-312 are disordered.

It belongs to the prokaryotic/mitochondrial release factor family. Methylated by PrmC. Methylation increases the termination efficiency of RF1.

It is found in the cytoplasm. Peptide chain release factor 1 directs the termination of translation in response to the peptide chain termination codons UAG and UAA. This is Peptide chain release factor 1 from Escherichia coli O81 (strain ED1a).